Reading from the N-terminus, the 263-residue chain is L-histidine 2-aminobutanoyltransferase (263 aa).

Belongs to the methyltransferase superfamily. CntL family.

It catalyses the reaction L-histidine + S-adenosyl-L-methionine = (2S)-2-amino-4-{[(1S)-1-carboxy-2-(1H-imidazol-4-yl)ethyl]amino}butanoate + S-methyl-5'-thioadenosine + H(+). Catalyzes the nucleophilic attack of one alpha-aminobutanoate moiety from SAM onto L-histidine to produce the intermediate (2S)-2-amino-4-{[(1S)-1-carboxy-2-(1H-imidazol-4-yl)ethyl]amino}butanoate. Functions in the biosynthesis of the metallophore pseudopaline, which is involved in the acquisition of nickel and zinc, and thus enables bacterial growth inside the host, where metal access is limited. Therefore, this enzyme probably contributes to Pseudomonas virulence. Appears to be specific for L-histidine as substrate. The protein is L-histidine 2-aminobutanoyltransferase of Pseudomonas aeruginosa (strain ATCC 15692 / DSM 22644 / CIP 104116 / JCM 14847 / LMG 12228 / 1C / PRS 101 / PAO1).